Here is a 128-residue protein sequence, read N- to C-terminus: Small ribosomal subunit protein uS13 (128 aa).

Residues 95–118 (GLPVRGQRTHTNARTRKGPKKGLV) are compositionally biased toward basic residues. The disordered stretch occupies residues 95-128 (GLPVRGQRTHTNARTRKGPKKGLVRKAAAPAPMA).

Belongs to the universal ribosomal protein uS13 family. In terms of assembly, part of the 30S ribosomal subunit. Forms a loose heterodimer with protein S19. Forms two bridges to the 50S subunit in the 70S ribosome.

Its function is as follows. Located at the top of the head of the 30S subunit, it contacts several helices of the 16S rRNA. In the 70S ribosome it contacts the 23S rRNA (bridge B1a) and protein L5 of the 50S subunit (bridge B1b), connecting the 2 subunits; these bridges are implicated in subunit movement. Contacts the tRNAs in the A and P-sites. This is Small ribosomal subunit protein uS13 from Anaeromyxobacter dehalogenans (strain 2CP-1 / ATCC BAA-258).